The following is a 140-amino-acid chain: uncharacterized protein (140 aa).

This is an uncharacterized protein from Sinorhizobium fredii (strain NBRC 101917 / NGR234).